The sequence spans 127 residues: DNA-directed RNA polymerase subunit omega (127 aa).

Belongs to the RNA polymerase subunit omega family. In terms of assembly, the RNAP catalytic core consists of 2 alpha, 1 beta, 1 beta' and 1 omega subunit. When a sigma factor is associated with the core the holoenzyme is formed, which can initiate transcription.

It carries out the reaction RNA(n) + a ribonucleoside 5'-triphosphate = RNA(n+1) + diphosphate. Its function is as follows. Promotes RNA polymerase assembly. Latches the N- and C-terminal regions of the beta' subunit thereby facilitating its interaction with the beta and alpha subunits. The polypeptide is DNA-directed RNA polymerase subunit omega (Rickettsia canadensis (strain McKiel)).